Consider the following 418-residue polypeptide: Actin-related protein 3-B (418 aa).

It belongs to the actin family. ARP3 subfamily. Component of the Arp2/3 complex composed of actr2/arp2, actr3/arp3, arpc1 (arpc1a or arpc1b), arpc2, arpc3, arpc4 and arpc5.

The protein resides in the cytoplasm. Its subcellular location is the cytoskeleton. It is found in the cell projection. The protein localises to the nucleus. Its function is as follows. ATP-binding component of the Arp2/3 complex, a multiprotein complex that mediates actin polymerization upon stimulation by nucleation-promoting factor (NPF). The Arp2/3 complex mediates the formation of branched actin networks in the cytoplasm, providing the force for cell motility. Seems to contact the pointed end of the daughter actin filament. In addition to its role in the cytoplasmic cytoskeleton, the Arp2/3 complex also promotes actin polymerization in the nucleus, thereby regulating gene transcription and repair of damaged DNA. The Arp2/3 complex promotes homologous recombination (HR) repair in response to DNA damage by promoting nuclear actin polymerization, leading to drive motility of double-strand breaks (DSBs). This Xenopus laevis (African clawed frog) protein is Actin-related protein 3-B (actr3-b).